The chain runs to 526 residues: GMP synthase [glutamine-hydrolyzing] (526 aa).

Residues 9 to 207 (RILILNFGSQ…VLDICSCQGR (199 aa)) enclose the Glutamine amidotransferase type-1 domain. Cys86 (nucleophile) is an active-site residue. Active-site residues include His181 and Glu183. Residues 208-401 (WTPNNIKENI…LGLPFHMLYR (194 aa)) form the GMPS ATP-PPase domain. 235–241 (SGGVDST) provides a ligand contact to ATP.

In terms of assembly, homodimer.

It catalyses the reaction XMP + L-glutamine + ATP + H2O = GMP + L-glutamate + AMP + diphosphate + 2 H(+). Its pathway is purine metabolism; GMP biosynthesis; GMP from XMP (L-Gln route): step 1/1. Its function is as follows. Catalyzes the synthesis of GMP from XMP. This is GMP synthase [glutamine-hydrolyzing] from Baumannia cicadellinicola subsp. Homalodisca coagulata.